The sequence spans 632 residues: PAN2-PAN3 deadenylation complex subunit PAN3 (632 aa).

Disordered stretches follow at residues 1–22 (MQPGEGYHYDSGPNNAVHPHQL) and 99–127 (PTFGPGQHMNHRASHHHQSPQMAQQPPTL). Positions 107 to 116 (MNHRASHHHQ) are enriched in basic residues. The segment covering 117–127 (SPQMAQQPPTL) has biased composition (polar residues). The tract at residues 223–494 (KADSAIIGDI…TINEIMPMIG (272 aa)) is pseudokinase domain. ATP contacts are provided by residues Arg270, 321-328 (DYYPLAGT), and 397-398 (NK). Positions 495–533 (GRFFTVMENMQAKTDVLEAELSREMENGRLFRLVAKMNT) form a coiled coil. Residues 534–632 (VLERVEHGTD…LLGTNMMLHR (99 aa)) are knob domain.

Belongs to the protein kinase superfamily. PAN3 family. In terms of assembly, homodimer. Forms a heterotrimer with a catalytic subunit PAN2 to form the poly(A)-nuclease (PAN) deadenylation complex. Interacts (via PAM-2 motif) with poly(A)-binding protein (via PABC domain), conferring substrate specificity of the enzyme complex. Interacts with the GW182 family protein ain-1. Highly expressed in germ cells.

The protein localises to the cytoplasm. It localises to the P-body. Its function is as follows. Regulatory subunit of the poly(A)-nuclease (PAN) deadenylation complex, one of two cytoplasmic mRNA deadenylases involved in general and miRNA-mediated mRNA turnover. PAN specifically shortens poly(A) tails of RNA and the activity is stimulated by poly(A)-binding protein (PABP). PAN deadenylation is followed by rapid degradation of the shortened mRNA tails by the CCR4-NOT complex. Deadenylated mRNAs are then degraded by two alternative mechanisms, namely exosome-mediated 3'-5' exonucleolytic degradation, or deadenylation-dependent mRNA decaping and subsequent 5'-3' exonucleolytic degradation by XRN1. PAN3 acts as a positive regulator for PAN activity, recruiting the catalytic subunit PAN2 to mRNA via its interaction with RNA and PABP, and to miRNA targets via its interaction with GW182 family proteins. Within the PAN complex, may positively regulate fertility. The sequence is that of PAN2-PAN3 deadenylation complex subunit PAN3 from Caenorhabditis elegans.